A 957-amino-acid polypeptide reads, in one-letter code: Glycine dehydrogenase (decarboxylating) (957 aa).

Lysine 708 is subject to N6-(pyridoxal phosphate)lysine.

This sequence belongs to the GcvP family. In terms of assembly, the glycine cleavage system is composed of four proteins: P, T, L and H. The cofactor is pyridoxal 5'-phosphate.

It carries out the reaction N(6)-[(R)-lipoyl]-L-lysyl-[glycine-cleavage complex H protein] + glycine + H(+) = N(6)-[(R)-S(8)-aminomethyldihydrolipoyl]-L-lysyl-[glycine-cleavage complex H protein] + CO2. The glycine cleavage system catalyzes the degradation of glycine. The P protein binds the alpha-amino group of glycine through its pyridoxal phosphate cofactor; CO(2) is released and the remaining methylamine moiety is then transferred to the lipoamide cofactor of the H protein. The protein is Glycine dehydrogenase (decarboxylating) of Escherichia coli O6:H1 (strain CFT073 / ATCC 700928 / UPEC).